A 30-amino-acid polypeptide reads, in one-letter code: YGGFMKSWNERSQKPLLTLFKNVIIKDGQQ.

N-acetyltyrosine is present on Tyr-1.

Belongs to the POMC family.

It is found in the secreted. This chain is Beta-endorphin-2, found in Oncorhynchus keta (Chum salmon).